The chain runs to 336 residues: uncharacterized protein (336 aa).

The interval 196–222 is disordered; it reads YKEGDDSNWDDFGSESEDDSKEAHSEE. Acidic residues predominate over residues 201 to 215; it reads DSNWDDFGSESEDDS. A Phosphoserine modification is found at serine 211.

This is an uncharacterized protein from Schizosaccharomyces pombe (strain 972 / ATCC 24843) (Fission yeast).